Consider the following 362-residue polypeptide: Formate dehydrogenase (362 aa).

The substrate site is built by valine 93 and asparagine 119. NAD(+) is bound by residues 174-175 (RI), aspartate 195, 230-234 (PLHAG), threonine 256, aspartate 282, 311-314 (HYSG), and serine 357.

It belongs to the D-isomer specific 2-hydroxyacid dehydrogenase family. FDH subfamily. As to quaternary structure, homodimer.

The protein localises to the cytoplasm. The catalysed reaction is formate + NAD(+) = CO2 + NADH. In terms of biological role, catalyzes the NAD(+)-dependent oxidation of formate to carbon dioxide. Formate oxidation is the final step in the methanol oxidation pathway in methylotrophic microorganisms. Has a role in the detoxification of exogenous formate in non-methylotrophic organisms. The chain is Formate dehydrogenase from Pichia angusta (Yeast).